Here is a 252-residue protein sequence, read N- to C-terminus: Type III pantothenate kinase (252 aa).

6–13 is a binding site for ATP; the sequence is DVGNTHTT. 104–107 lines the substrate pocket; it reads GADR. Asp-106 (proton acceptor) is an active-site residue. Residue Asp-126 coordinates K(+). Thr-129 is a binding site for ATP. Residue Thr-180 participates in substrate binding.

Belongs to the type III pantothenate kinase family. Homodimer. It depends on NH4(+) as a cofactor. Requires K(+) as cofactor.

Its subcellular location is the cytoplasm. It carries out the reaction (R)-pantothenate + ATP = (R)-4'-phosphopantothenate + ADP + H(+). The protein operates within cofactor biosynthesis; coenzyme A biosynthesis; CoA from (R)-pantothenate: step 1/5. In terms of biological role, catalyzes the phosphorylation of pantothenate (Pan), the first step in CoA biosynthesis. In Fervidobacterium nodosum (strain ATCC 35602 / DSM 5306 / Rt17-B1), this protein is Type III pantothenate kinase.